The sequence spans 623 residues: NADPH-dependent diflavin oxidoreductase 1 (623 aa).

The Flavodoxin-like domain occupies leucine 8 to tryptophan 153. Residues serine 14–alanine 19, serine 62–glycine 65, and aspartate 135 each bind FMN. The FAD-binding FR-type domain maps to lysine 221–proline 467. Residues arginine 369, arginine 399–serine 402, and glycine 433–serine 436 contribute to the FAD site. Residues threonine 475, serine 541 to arginine 542, lysine 547 to glutamine 551, and aspartate 583 contribute to the NADP(+) site. An FAD-binding site is contributed by tryptophan 622.

This sequence belongs to the NADPH-dependent diflavin oxidoreductase NDOR1 family. The protein in the N-terminal section; belongs to the flavodoxin family. It in the C-terminal section; belongs to the flavoprotein pyridine nucleotide cytochrome reductase family. In terms of assembly, interacts with At5g18400. Requires FAD as cofactor. It depends on FMN as a cofactor. As to expression, widely expressed.

Its subcellular location is the cytoplasm. The protein localises to the nucleus. The enzyme catalyses 2 oxidized [2Fe-2S]-[protein] + NADPH = 2 reduced [2Fe-2S]-[protein] + NADP(+) + H(+). Functionally, NADPH-dependent reductase which is a central component of the cytosolic iron-sulfur (Fe-S) protein assembly (CIA) machinery. Transfers electrons from NADPH via its FAD and FMN prosthetic groups to the [2Fe-2S] cluster of the anamorsin/DRE2 homolog, another key component of the CIA machinery. In turn, this reduced cluster provides electrons for assembly of cytosolic iron-sulfur cluster proteins. Catalyzes the NADP-dependent reduction of cytochrome c, but not cytochrome P450 in vitro. Required for embryo development. The protein is NADPH-dependent diflavin oxidoreductase 1 (ATR3) of Arabidopsis thaliana (Mouse-ear cress).